A 612-amino-acid chain; its full sequence is Peroxisomal carnitine O-octanoyltransferase (612 aa).

The residue at position 1 (methionine 1) is an N-acetylmethionine. N6-succinyllysine occurs at positions 40 and 57. Histidine 327 serves as the catalytic Proton acceptor. CoA-binding positions include lysine 406 and 410 to 417; that span reads KEKQLHPD. Lysine 406 is modified (N6-acetyllysine; alternate). Lysine 406 carries the N6-succinyllysine; alternate modification. Residues tyrosine 439, threonine 441, and threonine 452 each coordinate (R)-carnitine. A Microbody targeting signal motif is present at residues 610–612; that stretch reads PHL.

Belongs to the carnitine/choline acetyltransferase family. In terms of assembly, monomer.

The protein localises to the peroxisome. The catalysed reaction is octanoyl-CoA + (R)-carnitine = O-octanoyl-(R)-carnitine + CoA. It catalyses the reaction 4,8-dimethylnonanoyl-CoA + (R)-carnitine = O-4,8-dimethylnonanoyl-(R)-carnitine + CoA. The protein operates within lipid metabolism; fatty acid beta-oxidation. Functionally, beta-oxidation of fatty acids. The highest activity concerns the C6 to C10 chain length substrate. The sequence is that of Peroxisomal carnitine O-octanoyltransferase (CROT) from Bos taurus (Bovine).